A 586-amino-acid chain; its full sequence is Pescadillo homolog (586 aa).

A required for 28S ribosomal RNA processing region spans residues 1–54; it reads MGGLEKKKYERGSATNYITRNKARKKLQLSLPDFRRLCILKGIYPHEPKHKKKV. The interval 1–257 is sufficient for nucleolar localization; that stretch reads MGGLEKKKYE…PKIESQAQAE (257 aa). Lysine 98 is subject to N6-acetyllysine. The interval 305-414 is sufficient for interaction with MAP1B; that stretch reads VTAQEEDRRK…LLLPVAEYFP (110 aa). The region spanning 321 to 414 is the BRCT domain; that stretch reads KHKKLFEGLK…LLLPVAEYFP (94 aa). The interval 447–508 is disordered; that stretch reads GEDPGNLEEE…QQRLGGKKPQ (62 aa). Residues 451–491 show a composition bias toward acidic residues; it reads GNLEEEEEDEDDEGDDSEGDGDVAVENEEEVVEAESEEEEE. Lysine 515 is covalently cross-linked (Glycyl lysine isopeptide (Lys-Gly) (interchain with G-Cter in SUMO1); alternate). A Glycyl lysine isopeptide (Lys-Gly) (interchain with G-Cter in SUMO2); alternate cross-link involves residue lysine 515. A required for 28S ribosomal RNA processing region spans residues 537-586; the sequence is MMKKREKYLYQKIMFGKRRKIREANKLAEKRKAHDDAVRSEKKAKRTRPV. Basic and acidic residues predominate over residues 562-577; sequence KLAEKRKAHDDAVRSE. Residues 562–586 are disordered; sequence KLAEKRKAHDDAVRSEKKAKRTRPV.

Belongs to the pescadillo family. As to quaternary structure, component of the PeBoW complex, composed of BOP1, PES1 and WDR12. The complex is held together by BOP1, which interacts with PES1 via its N-terminal domain and with WDR12 via a high-affinity interaction between the seven-bladed beta-propeller domains of the 2 proteins. The PeBoW complex associates with the 66S pre-ribosome. The PeBoW complex also associates with DDX27, PES1 interacts directly with DDX27. Interacts with IRS1 and UBTF. May interact with MAP1B. Post-translationally, sumoylated.

The protein resides in the nucleus. The protein localises to the nucleolus. It localises to the nucleoplasm. Its subcellular location is the chromosome. In terms of biological role, component of the PeBoW complex, which is required for maturation of 28S and 5.8S ribosomal RNAs and formation of the 60S ribosome. This is Pescadillo homolog (Pes1) from Rattus norvegicus (Rat).